Reading from the N-terminus, the 600-residue chain is Aspartate--tRNA(Asp/Asn) ligase (600 aa).

Glutamate 176 provides a ligand contact to L-aspartate. Residues 200–203 (QQFK) form an aspartate region. Residues arginine 222 and histidine 452 each coordinate L-aspartate. Residue 222 to 224 (RDE) coordinates ATP. Glutamate 490 is a binding site for ATP. Arginine 497 is a binding site for L-aspartate. 542–545 (GIDR) is a binding site for ATP.

It belongs to the class-II aminoacyl-tRNA synthetase family. Type 1 subfamily. As to quaternary structure, homodimer.

It localises to the cytoplasm. It carries out the reaction tRNA(Asx) + L-aspartate + ATP = L-aspartyl-tRNA(Asx) + AMP + diphosphate. Its function is as follows. Aspartyl-tRNA synthetase with relaxed tRNA specificity since it is able to aspartylate not only its cognate tRNA(Asp) but also tRNA(Asn). Reaction proceeds in two steps: L-aspartate is first activated by ATP to form Asp-AMP and then transferred to the acceptor end of tRNA(Asp/Asn). The sequence is that of Aspartate--tRNA(Asp/Asn) ligase from Rickettsia felis (strain ATCC VR-1525 / URRWXCal2) (Rickettsia azadi).